The following is a 333-amino-acid chain: tRNA N6-adenosine threonylcarbamoyltransferase (333 aa).

Residues His111 and His115 each coordinate Fe cation. Substrate-binding positions include 134–138 (VVSGG), Asp167, Gly180, Asp184, and Asn269. Position 297 (Asp297) interacts with Fe cation.

This sequence belongs to the KAE1 / TsaD family. Fe(2+) is required as a cofactor.

Its subcellular location is the cytoplasm. The catalysed reaction is L-threonylcarbamoyladenylate + adenosine(37) in tRNA = N(6)-L-threonylcarbamoyladenosine(37) in tRNA + AMP + H(+). Functionally, required for the formation of a threonylcarbamoyl group on adenosine at position 37 (t(6)A37) in tRNAs that read codons beginning with adenine. Is involved in the transfer of the threonylcarbamoyl moiety of threonylcarbamoyl-AMP (TC-AMP) to the N6 group of A37, together with TsaE and TsaB. TsaD likely plays a direct catalytic role in this reaction. The sequence is that of tRNA N6-adenosine threonylcarbamoyltransferase from Carboxydothermus hydrogenoformans (strain ATCC BAA-161 / DSM 6008 / Z-2901).